Here is an 87-residue protein sequence, read N- to C-terminus: Small ribosomal subunit protein eS21 (87 aa).

It belongs to the eukaryotic ribosomal protein eS21 family. Component of the small ribosomal subunit. Mature ribosomes consist of a small (40S) and a large (60S) subunit. The 40S subunit contains about 33 different proteins and 1 molecule of RNA (18S). The 60S subunit contains about 49 different proteins and 3 molecules of RNA (25S, 5.8S and 5S).

The protein localises to the cytoplasm. Functionally, required for the processing of the 20S rRNA-precursor to mature 18S rRNA in a late step of the maturation of 40S ribosomal subunits. Has a physiological role leading to 18S rRNA stability. This Eremothecium gossypii (strain ATCC 10895 / CBS 109.51 / FGSC 9923 / NRRL Y-1056) (Yeast) protein is Small ribosomal subunit protein eS21 (RPS21).